Consider the following 343-residue polypeptide: Probable fructokinase-7 (343 aa).

N-acetylglycine is present on Gly2.

It belongs to the carbohydrate kinase PfkB family.

The enzyme catalyses D-fructose + ATP = D-fructose 6-phosphate + ADP + H(+). Its pathway is glycan biosynthesis; starch biosynthesis. May play an important role in maintaining the flux of carbon towards starch formation. This Arabidopsis thaliana (Mouse-ear cress) protein is Probable fructokinase-7.